Here is a 349-residue protein sequence, read N- to C-terminus: DNA fragmentation factor subunit beta (349 aa).

The CIDE-N domain occupies Gln7 to Gly83. A disordered region spans residues Arg319–Gln349. The segment covering Ser329–Gln349 has biased composition (basic residues).

In terms of assembly, heterodimer of DFFA and DFFB. Interacts with H1-1.

It localises to the cytoplasm. It is found in the nucleus. Inhibited by DFFA (DFF45). In terms of biological role, nuclease that induces DNA fragmentation and chromatin condensation during apoptosis. Degrades naked DNA and induces apoptotic morphology. This is DNA fragmentation factor subunit beta (Dffb) from Rattus norvegicus (Rat).